We begin with the raw amino-acid sequence, 419 residues long: L-rhamnose isomerase (419 aa).

The Mn(2+) site is built by H262, D294, and D296.

It belongs to the rhamnose isomerase family. In terms of assembly, homotetramer. The cofactor is Mn(2+).

The protein localises to the cytoplasm. The catalysed reaction is L-rhamnopyranose = L-rhamnulose. It functions in the pathway carbohydrate degradation; L-rhamnose degradation; glycerone phosphate from L-rhamnose: step 1/3. Catalyzes the interconversion of L-rhamnose and L-rhamnulose. The protein is L-rhamnose isomerase of Citrobacter koseri (strain ATCC BAA-895 / CDC 4225-83 / SGSC4696).